A 232-amino-acid chain; its full sequence is Y-linked testis-specific protein 1 (232 aa).

This sequence belongs to the SPIN/STSY family. Expressed in testis (at protein level).

This Mus musculus (Mouse) protein is Y-linked testis-specific protein 1 (Ssty1).